Reading from the N-terminus, the 876-residue chain is Leucine--tRNA ligase (876 aa).

The short motif at 42–52 (PYPSGKLHMGH) is the 'HIGH' region element. A 'KMSKS' region motif is present at residues 634-638 (KMSKS). Lysine 637 provides a ligand contact to ATP.

Belongs to the class-I aminoacyl-tRNA synthetase family.

Its subcellular location is the cytoplasm. It catalyses the reaction tRNA(Leu) + L-leucine + ATP = L-leucyl-tRNA(Leu) + AMP + diphosphate. This is Leucine--tRNA ligase from Neisseria meningitidis serogroup C (strain 053442).